Consider the following 171-residue polypeptide: MELKSYVREIADFPKKGVSYKDITPLLLDPEAMRLAVKLFMKNLPHGKIDKVVGIESRGFFFATMLAEKLNAGFIPVRKPGKLPHRTHKENYDLEYGSDSLEIHEDAIKKGEKVLLHDDVLATGGTAAATCKLIEKCGGEIVQCNFLVELEFLKGVDKLKGYDVCSLIKYS.

This sequence belongs to the purine/pyrimidine phosphoribosyltransferase family. As to quaternary structure, homodimer.

The protein localises to the cytoplasm. The enzyme catalyses AMP + diphosphate = 5-phospho-alpha-D-ribose 1-diphosphate + adenine. Its pathway is purine metabolism; AMP biosynthesis via salvage pathway; AMP from adenine: step 1/1. Functionally, catalyzes a salvage reaction resulting in the formation of AMP, that is energically less costly than de novo synthesis. This is Adenine phosphoribosyltransferase from Christiangramia forsetii (strain DSM 17595 / CGMCC 1.15422 / KT0803) (Gramella forsetii).